A 100-amino-acid polypeptide reads, in one-letter code: Small cysteine and glycine repeat-containing protein 3 (100 aa).

Residues 4–82 (CGCGSCGGCG…RRTCRSCGCG (79 aa)) are 13 X 2 AA repeats of CG.

This sequence belongs to the KRTAP type 28 family.

In the hair cortex, hair keratin intermediate filaments are embedded in an interfilamentous matrix, consisting of hair keratin-associated proteins (KRTAP), which are essential for the formation of a rigid and resistant hair shaft through their extensive disulfide bond cross-linking with abundant cysteine residues of hair keratins. The matrix proteins include the high-sulfur and high-glycine-tyrosine keratins. This Homo sapiens (Human) protein is Small cysteine and glycine repeat-containing protein 3.